Consider the following 254-residue polypeptide: 14-3-3-like protein RA215 (254 aa).

Belongs to the 14-3-3 family.

This is 14-3-3-like protein RA215 from Solanum tuberosum (Potato).